The chain runs to 206 residues: Cytochrome c oxidase subunit 3 (206 aa).

The next 5 membrane-spanning stretches (helical) occupy residues 26-46, 68-88, 97-117, 143-163, and 185-205; these read FLGF…FFGT, LVFI…LAMF, AMMI…GFEI, LVGL…VLLI, and WHFI…MGVG.

This sequence belongs to the cytochrome c oxidase subunit 3 family.

It localises to the cell membrane. The catalysed reaction is 4 Fe(II)-[cytochrome c] + O2 + 8 H(+)(in) = 4 Fe(III)-[cytochrome c] + 2 H2O + 4 H(+)(out). This chain is Cytochrome c oxidase subunit 3 (ctaE), found in Alkalihalophilus pseudofirmus (strain ATCC BAA-2126 / JCM 17055 / OF4) (Bacillus pseudofirmus).